Here is a 440-residue protein sequence, read N- to C-terminus: Serine hydroxymethyltransferase (440 aa).

123–125 (GHI) contributes to the (6S)-5,6,7,8-tetrahydrofolate binding site. N6-(pyridoxal phosphate)lysine is present on K238.

Belongs to the SHMT family. In terms of assembly, homodimer. Requires pyridoxal 5'-phosphate as cofactor.

The protein resides in the cytoplasm. The protein operates within amino-acid biosynthesis; glycine biosynthesis; glycine from L-serine: step 1/1. In terms of biological role, catalyzes the reversible interconversion of serine and glycine with a modified folate serving as the one-carbon carrier. Also exhibits a pteridine-independent aldolase activity toward beta-hydroxyamino acids, producing glycine and aldehydes, via a retro-aldol mechanism. The protein is Serine hydroxymethyltransferase of Nitrosopumilus maritimus (strain SCM1).